The primary structure comprises 113 residues: Insulin-like peptide 02 (113 aa).

The N-terminal stretch at 1–22 (MFYLTFLLFGAICIGQIQLGQP) is a signal peptide. The propeptide occupies 23 to 42 (VKFKVNEDGHRPSVYPIKYR). Cystine bridges form between Cys44-Cys99, Cys56-Cys112, and Cys98-Cys103. Residues 62–87 (RRKRSIEADIITDKDTANSYFNRVKR) constitute a propeptide, c peptide.

It belongs to the insulin family.

The protein resides in the secreted. Functionally, insulin decreases blood glucose concentration. May have evolved to activate insulin receptors (INSR) in vertebrates. Molecular docking studies reveals unique interaction with the human insulin receptor. In vivo, insulin-like peptide injection reduces blood glucose levels in two models of zebrafish diabetes (streptozotocin- and glucose-induced). Also shorter swimming distance of zebrafish larvae, an effect which is not observed with human insulin. In Exaiptasia diaphana (Tropical sea anemone), this protein is Insulin-like peptide 02.